The following is a 290-amino-acid chain: Cbb3-type cytochrome c oxidase subunit FixP (290 aa).

Residues 1–32 (MTDHSEFDSVSGKTTTGHEWDGIKELNTPLPR) lie on the Cytoplasmic side of the membrane. A helical membrane pass occupies residues 33–53 (WWVICFYLTIVWAIGYWIVYP). Topologically, residues 54–290 (AWPLISSNTT…VYVHSLGGGK (237 aa)) are periplasmic. 2 Cytochrome c domains span residues 109–198 (LARA…RSLS) and 206–287 (YDAA…HSLG). Residues Cys-122, Cys-125, His-126, Met-173, Cys-219, Cys-222, His-223, and Met-264 each contribute to the heme c site.

This sequence belongs to the CcoP / FixP family. Component of the cbb3-type cytochrome c oxidase at least composed of FixN, FixO, FixQ and FixP. Heme c serves as cofactor.

Its subcellular location is the cell inner membrane. It participates in energy metabolism; oxidative phosphorylation. C-type cytochrome. Part of the cbb3-type cytochrome c oxidase complex. FixP subunit is required for transferring electrons from donor cytochrome c via its heme groups to FixO subunit. From there, electrons are shuttled to the catalytic binuclear center of FixN subunit where oxygen reduction takes place. The complex also functions as a proton pump. The sequence is that of Cbb3-type cytochrome c oxidase subunit FixP from Bradyrhizobium diazoefficiens (strain JCM 10833 / BCRC 13528 / IAM 13628 / NBRC 14792 / USDA 110).